We begin with the raw amino-acid sequence, 272 residues long: tRNA pseudouridine synthase B (272 aa).

Asp-38 functions as the Nucleophile in the catalytic mechanism.

The protein belongs to the pseudouridine synthase TruB family. Type 1 subfamily.

It catalyses the reaction uridine(55) in tRNA = pseudouridine(55) in tRNA. Its function is as follows. Responsible for synthesis of pseudouridine from uracil-55 in the psi GC loop of transfer RNAs. In Campylobacter jejuni subsp. jejuni serotype O:6 (strain 81116 / NCTC 11828), this protein is tRNA pseudouridine synthase B.